Reading from the N-terminus, the 239-residue chain is uncharacterized protein (239 aa).

Positions 129–155 (DSLDDEDDNMISSNDPTKSPEEHDTTT) are disordered. At serine 160 the chain carries Phosphoserine.

This is an uncharacterized protein from Schizosaccharomyces pombe (strain 972 / ATCC 24843) (Fission yeast).